We begin with the raw amino-acid sequence, 270 residues long: Phosphatidylglycerol--prolipoprotein diacylglyceryl transferase (270 aa).

4 helical membrane passes run 19–39 (FPVY…LWLA), 56–76 (LVLI…VIFE), 92–112 (QGGL…ILFA), and 116–136 (GVSF…GQAI). Arg-138 lines the a 1,2-diacyl-sn-glycero-3-phospho-(1'-sn-glycerol) pocket. 3 helical membrane passes run 178–198 (HPTF…LLAL), 206–226 (GELF…VEGL), and 236–256 (LRIA…FIIV).

This sequence belongs to the Lgt family.

Its subcellular location is the cell membrane. It carries out the reaction L-cysteinyl-[prolipoprotein] + a 1,2-diacyl-sn-glycero-3-phospho-(1'-sn-glycerol) = an S-1,2-diacyl-sn-glyceryl-L-cysteinyl-[prolipoprotein] + sn-glycerol 1-phosphate + H(+). The protein operates within protein modification; lipoprotein biosynthesis (diacylglyceryl transfer). Catalyzes the transfer of the diacylglyceryl group from phosphatidylglycerol to the sulfhydryl group of the N-terminal cysteine of a prolipoprotein, the first step in the formation of mature lipoproteins. This is Phosphatidylglycerol--prolipoprotein diacylglyceryl transferase from Bacillus anthracis (strain A0248).